A 294-amino-acid polypeptide reads, in one-letter code: Nucleotide-binding protein Tfu_2020 (294 aa).

18–25 (GMSGAGRS) contributes to the ATP binding site. A GTP-binding site is contributed by 69-72 (DVRS).

This sequence belongs to the RapZ-like family.

Functionally, displays ATPase and GTPase activities. In Thermobifida fusca (strain YX), this protein is Nucleotide-binding protein Tfu_2020.